Here is a 150-residue protein sequence, read N- to C-terminus: UPF0756 membrane protein NT05HA_0561 (150 aa).

4 helical membrane passes run 1-21 (MSLQFNMIALLLVILILLGIF), 52-72 (YGLSIGIVILTIGVLSPLVSG), 81-101 (AFVSWKMFVAIAVGVFVAWLA), and 128-148 (FLGGIPVGPLIAAGILAVLIG).

The protein belongs to the UPF0756 family.

It localises to the cell membrane. The sequence is that of UPF0756 membrane protein NT05HA_0561 from Aggregatibacter aphrophilus (strain NJ8700) (Haemophilus aphrophilus).